A 343-amino-acid polypeptide reads, in one-letter code: Twinfilin (343 aa).

2 ADF-H domains span residues 11–135 and 184–312; these read EQLA…EGYR and EATV…DELH. Residues 319–343 are disordered; that stretch reads RPAFAKPKGPPNRGAKRLTRPTAED.

The protein belongs to the actin-binding proteins ADF family. Twinfilin subfamily. Interacts with G-actin; ADP-actin form.

Its subcellular location is the cytoplasm. The protein resides in the cytoskeleton. It localises to the cell cortex. Its function is as follows. Actin-binding protein involved in motile and morphological processes. Inhibits actin polymerization, likely by sequestering G-actin. The sequence is that of Twinfilin (twf) from Drosophila melanogaster (Fruit fly).